A 128-amino-acid chain; its full sequence is 3-aminoacrylate deaminase RutC (128 aa).

It belongs to the RutC family. Homotrimer.

The enzyme catalyses (Z)-3-aminoacrylate + H2O + H(+) = 3-oxopropanoate + NH4(+). Its function is as follows. Involved in pyrimidine catabolism. Catalyzes the deamination of 3-aminoacrylate to malonic semialdehyde, a reaction that can also occur spontaneously. RutC may facilitate the reaction and modulate the metabolic fitness, rather than catalyzing essential functions. The chain is 3-aminoacrylate deaminase RutC from Escherichia coli (strain SE11).